The chain runs to 415 residues: Putative F-box/FBD/LRR-repeat protein At3g49040 (415 aa).

The F-box domain occupies 10–58 (EDRISELHEALLVHIMSSLPTKTVVATSVLSKRWRHVWKTVQNLKFVSK). LRR repeat units lie at residues 60-86 (HQTFSEDVYRFFMLHKAPFLESLDLEF), 87-114 (SNQLDASDLGILVGIAFARHVRNLVLDL), 143-170 (TLTLKHSILLYFPYRVCLKSLRKLHLYK), 171-196 (VHFYGKDSVYNLLCGCPSLRDLIVHR), and 213-241 (RLTIEDSGFGYGCCYVINAPSLKYLNIRR). The 106-residue stretch at 272–377 (ILESLTSAKR…TSLKKATFST (106 aa)) folds into the FBD domain.

In Arabidopsis thaliana (Mouse-ear cress), this protein is Putative F-box/FBD/LRR-repeat protein At3g49040.